A 1009-amino-acid chain; its full sequence is Probable beta-galactosidase B (1009 aa).

A signal peptide spans 1–27 (MKTIAGLSWISALSSLASLPNGLGVSA). Position 96 (Tyr-96) interacts with substrate. A glycan (N-linked (GlcNAc...) asparagine) is linked at Asn-106. Substrate is bound by residues Asn-141, Ala-142, Glu-143, and Asn-201. The active-site Proton donor is the Glu-202. Substrate is bound at residue Tyr-271. Cys-277 and Cys-330 are joined by a disulfide. Catalysis depends on Glu-314, which acts as the Nucleophile. Position 379 (Tyr-379) interacts with substrate. N-linked (GlcNAc...) asparagine glycans are attached at residues Asn-467, Asn-495, Asn-547, Asn-593, Asn-632, Asn-672, Asn-707, Asn-775, Asn-782, Asn-789, Asn-795, and Asn-914.

The protein belongs to the glycosyl hydrolase 35 family.

The protein localises to the secreted. The enzyme catalyses Hydrolysis of terminal non-reducing beta-D-galactose residues in beta-D-galactosides.. In terms of biological role, cleaves beta-linked terminal galactosyl residues from gangliosides, glycoproteins, and glycosaminoglycans. The chain is Probable beta-galactosidase B (lacB) from Pyrenophora tritici-repentis (strain Pt-1C-BFP) (Wheat tan spot fungus).